We begin with the raw amino-acid sequence, 547 residues long: Cytochrome P450 monooxygenase fsoD (547 aa).

The chain crosses the membrane as a helical span at residues 3 to 23 (DITLAAVSIGLFFYVGARAVL). Heme is bound at residue Cys-490.

Belongs to the cytochrome P450 family. Heme serves as cofactor.

Its subcellular location is the membrane. It carries out the reaction isomotiol + reduced [NADPH--hemoprotein reductase] + O2 = 2alpha-hydroxyisomotiol + oxidized [NADPH--hemoprotein reductase] + H2O + H(+). Its pathway is secondary metabolite biosynthesis; terpenoid biosynthesis. Functionally, cytochrome P450 monooxygenase; part of the gene cluster that mediates the biosynthesis of the enfumafungin-type antibiotic, fuscoatroside. Within the pathway, fsoD catalyzes the hydroxylation at position C2 of isomotiol to produce 2-alpha-hydroxy-isomotiol. FsoD may also hydroxylate the intermediates 3-O-(beta-D-glucopyranosyl)-isomotiol and 2-deacetoxy-fuscoatroside at the same position C2. The fuscoatroside biosynthesis is initiated by the cyclization of 2,3(S)-oxidosqualene through FsoA's terpene cyclase (TC) domain, leading to the formation of the fernane skeleton isomotiol, harboring a fernane triterpene skeleton with a C8-C9 double bond. Subsequently, C2-alpha-hydroxylation mediated by fsoD results in the production of 2-alpha-hydroxy-isomotiol, which is further acetylated by fsoF. The glycosyltransferase (GT) domain of FsoA may convert isomotiol, 2-alpha-hydroxy-isomotiol, and the acetylated derivative of 2-alpha-hydroxy-isomotiol into their corresponding glycosides 3-O-(beta-D-glucopyranosyl)-isomotiol, 3-O-(beta-D-glucopyranosyl)-2-alpha-hydroxy-isomotiol, and 3-O-(beta-D-glucopyranosyl)-2-alpha-acetoxy-isomotiol, which then undergo oxidative cleavage under the action of fsoE to form s 2-deacetoxy-fuscoatroside, 2-deacetyl-fuscoatroside, and fuscoatroside, respectively. Although hydroxylation followed by acetylation of 3-O-(beta-D-glucopyranosyl)-isomotiol and 2-deacetoxy-fuscoatroside by fsoD and fsoF could not be ruled out, this process is likely to occur with difficulty due to bulky steric hindrance caused by the presence of a glycan at C3 in these compounds. Interestingly, fsoE can also utilize the aglycones isomotiol and 2-alpha-hydroxy-isomotiol as substrates to generate 19-beta-hydroxy-isomotiol and 2-alpha,19-beta-dihydroxy-isomotiol, respectively. These reactions occur with lower efficiency. Finally, fsoE can further convert 2-alpha,19-beta-dihydroxy-isomotiol into 2-alpha-hydroxy-ismotiol-19-one and 2-alpha-hydroxy-ismotiol-19-one into 2-deacetyl-3-deglucopyranosyl-fuscoatroside. In Humicola fuscoatra, this protein is Cytochrome P450 monooxygenase fsoD.